A 424-amino-acid polypeptide reads, in one-letter code: Ribulose bisphosphate carboxylase (424 aa).

Catalysis depends on Lys159, which acts as the Proton acceptor. Position 161 (Lys161) interacts with substrate. Residues Lys185, Asp187, and Glu188 each contribute to the Mg(2+) site. Lys185 is modified (N6-carboxylysine). His277 (proton acceptor) is an active-site residue. Substrate is bound by residues Arg278, His310, 347–349 (SGG), and 369–372 (QAGG).

Belongs to the RuBisCO large chain family. Type III subfamily. Homodimer or homodecamer. In contrast to form I RuBisCO, the form III RuBisCO is composed solely of large subunits. The cofactor is Mg(2+).

It catalyses the reaction 2 (2R)-3-phosphoglycerate + 2 H(+) = D-ribulose 1,5-bisphosphate + CO2 + H2O. It carries out the reaction D-ribulose 1,5-bisphosphate + O2 = 2-phosphoglycolate + (2R)-3-phosphoglycerate + 2 H(+). Catalyzes the addition of molecular CO(2) and H(2)O to ribulose 1,5-bisphosphate (RuBP), generating two molecules of 3-phosphoglycerate (3-PGA). Functions in an archaeal AMP degradation pathway, together with AMP phosphorylase and R15P isomerase. The sequence is that of Ribulose bisphosphate carboxylase from Pyrococcus abyssi (strain GE5 / Orsay).